Consider the following 864-residue polypeptide: Valine--tRNA ligase (864 aa).

Positions 42-52 match the 'HIGH' region motif; it reads PTISGKLHIGH. Positions 589 to 593 match the 'KMSKS' region motif; the sequence is KMSKS. Residue Lys592 coordinates ATP.

The protein belongs to the class-I aminoacyl-tRNA synthetase family. ValS type 2 subfamily. As to quaternary structure, monomer.

The protein resides in the cytoplasm. It catalyses the reaction tRNA(Val) + L-valine + ATP = L-valyl-tRNA(Val) + AMP + diphosphate. Its function is as follows. Catalyzes the attachment of valine to tRNA(Val). As ValRS can inadvertently accommodate and process structurally similar amino acids such as threonine, to avoid such errors, it has a 'posttransfer' editing activity that hydrolyzes mischarged Thr-tRNA(Val) in a tRNA-dependent manner. The sequence is that of Valine--tRNA ligase from Wolbachia pipientis wMel.